Consider the following 183-residue polypeptide: Translation initiation factor IF-3 (183 aa).

This sequence belongs to the IF-3 family. Monomer.

The protein resides in the cytoplasm. In terms of biological role, IF-3 binds to the 30S ribosomal subunit and shifts the equilibrium between 70S ribosomes and their 50S and 30S subunits in favor of the free subunits, thus enhancing the availability of 30S subunits on which protein synthesis initiation begins. The sequence is that of Translation initiation factor IF-3 from Pseudomonas fluorescens (strain SBW25).